Consider the following 258-residue polypeptide: Thiazole synthase (258 aa).

Catalysis depends on Lys-100, which acts as the Schiff-base intermediate with DXP. Residues Gly-161, 187–188 (AG), and 209–210 (NT) contribute to the 1-deoxy-D-xylulose 5-phosphate site.

The protein belongs to the ThiG family. In terms of assembly, homotetramer. Forms heterodimers with either ThiH or ThiS.

The protein localises to the cytoplasm. It carries out the reaction [ThiS sulfur-carrier protein]-C-terminal-Gly-aminoethanethioate + 2-iminoacetate + 1-deoxy-D-xylulose 5-phosphate = [ThiS sulfur-carrier protein]-C-terminal Gly-Gly + 2-[(2R,5Z)-2-carboxy-4-methylthiazol-5(2H)-ylidene]ethyl phosphate + 2 H2O + H(+). The protein operates within cofactor biosynthesis; thiamine diphosphate biosynthesis. Catalyzes the rearrangement of 1-deoxy-D-xylulose 5-phosphate (DXP) to produce the thiazole phosphate moiety of thiamine. Sulfur is provided by the thiocarboxylate moiety of the carrier protein ThiS. In vitro, sulfur can be provided by H(2)S. The protein is Thiazole synthase of Campylobacter jejuni subsp. doylei (strain ATCC BAA-1458 / RM4099 / 269.97).